An 82-amino-acid chain; its full sequence is Envelope small membrane protein (82 aa).

Over 1–16 the chain is Virion surface; that stretch reads MLPFVQERIGLFIVNF. The helical transmembrane segment at 17–37 threads the bilayer; that stretch reads FIFTVVCAITLLVCMAFLTAT. Over 38 to 78 the chain is Intravirion; that stretch reads RLCVQCMTGFNTLLVQPALYLYNTGRSVYVKFQDSKPPLPP.

Belongs to the betacoronaviruses E protein family. Homopentamer. Interacts with membrane protein M in the budding compartment of the host cell, which is located between endoplasmic reticulum and the Golgi complex. Interacts with Nucleoprotein.

It is found in the host Golgi apparatus membrane. Plays a central role in virus morphogenesis and assembly. Acts as a viroporin and self-assembles in host membranes forming pentameric protein-lipid pores that allow ion transport. Also plays a role in the induction of apoptosis. The polypeptide is Envelope small membrane protein (Middle East respiratory syndrome-related coronavirus (isolate United Kingdom/H123990006/2012) (MERS-CoV)).